Reading from the N-terminus, the 89-residue chain is Large ribosomal subunit protein bL27 (89 aa).

It belongs to the bacterial ribosomal protein bL27 family.

The sequence is that of Large ribosomal subunit protein bL27 from Bacteroides fragilis (strain ATCC 25285 / DSM 2151 / CCUG 4856 / JCM 11019 / LMG 10263 / NCTC 9343 / Onslow / VPI 2553 / EN-2).